Here is a 547-residue protein sequence, read N- to C-terminus: Immunoglobulin epsilon heavy chain (547 aa).

The residue at position 1 (glutamine 1) is a Pyrrolidone carboxylic acid. Ig-like domains follow at residues 1–120, 130–223, 232–329, 333–437, and 443–542; these read QVQL…TEVT, PSVF…KTFS, PTVK…KKCA, PRGV…TKTS, and PEVY…RAVS. Residues 1–124 are variable (V) domain, involved in antigen recognition; sequence QVQLVQSGAE…EGTEVTYTVS (124 aa). Disulfide bonds link cysteine 22–cysteine 96, cysteine 139–cysteine 225, cysteine 153–cysteine 207, cysteine 254–cysteine 312, cysteine 358–cysteine 418, and cysteine 464–cysteine 524. The constant (C) domain stretch occupies residues 125–547; that stretch reads GAWTLPSVFP…QRAVSVNPGK (423 aa). Asparagine 145, asparagine 173, asparagine 219, asparagine 265, asparagine 371, asparagine 383, and asparagine 394 each carry an N-linked (GlcNAc...) asparagine glycan.

Immunoglobulins are composed of two identical heavy chains and two identical light chains; disulfide-linked.

It localises to the secreted. It is found in the cell membrane. In terms of biological role, immunoglobulins, also known as antibodies, are membrane-bound or secreted glycoproteins produced by B lymphocytes. In the recognition phase of humoral immunity, the membrane-bound immunoglobulins serve as receptors which, upon binding of a specific antigen, trigger the clonal expansion and differentiation of B lymphocytes into immunoglobulins-secreting plasma cells. Secreted immunoglobulins mediate the effector phase of humoral immunity, which results in the elimination of bound antigens. The antigen binding site is formed by the variable domain of one heavy chain, together with that of its associated light chain. Thus, each immunoglobulin has two antigen binding sites with remarkable affinity for a particular antigen. The variable domains are assembled by a process called V-(D)-J rearrangement and can then be subjected to somatic hypermutations which, after exposure to antigen and selection, allow affinity maturation for a particular antigen. In Homo sapiens (Human), this protein is Immunoglobulin epsilon heavy chain.